Reading from the N-terminus, the 428-residue chain is MAENTPKPAAGTAPAKPKPAAPGAAKPAAPKAARPGAAKPAAKPAAPRAAAPSGVYKKPPVDRPDPNPFKDSKRDAVAGWFQERFYVLNPIIDYLKHKEVPKHALSFWYYFGGLGLFFFVIQILTGLLLLQYYKPTETDAFASFLFIQGEVPFGWLLRQIHAWSANLMIMMLFIHMFSTFFMKSYRKPRELMWVSGFVLLLLSLGFGFTGYLLPWNELAFFATQVGTEVPKVAPGGAFLVEILRGGPEVGGETLTRMFSLHVVLLPGLVMLVLAAHLTLVQILGTSAPIGYKEAGLIKGYDKFFPTFLAKDGIGWLIGFALLIYLAVMFPWEIGVKANPLSPAPLGIKPEWYFWAQFQLLKDFKFEGGELLAIILFTIGGVVWLLVPFIDRQASEEKKSPIFTIFGILVLAFLLINTYRVYAEYSMLK.

Composition is skewed to low complexity over residues 1 to 15 and 21 to 52; these read MAEN…TAPA and APGA…AAAP. The segment at 1–72 is disordered; that stretch reads MAENTPKPAA…RPDPNPFKDS (72 aa). A compositionally biased stretch (basic and acidic residues) spans 59 to 72; the sequence is PPVDRPDPNPFKDS. Residues 110–130 traverse the membrane as a helical segment; sequence YFGGLGLFFFVIQILTGLLLL. 2 residues coordinate heme b: histidine 161 and histidine 175. 6 helical membrane passes run 162-182, 193-213, 260-280, 312-331, 369-389, and 401-421; these read AWSA…TFFM, WVSG…GYLL, LHVV…LTLV, GIGW…MFPW, ELLA…VPFI, and IFTI…YRVY. Heme b-binding residues include histidine 261 and histidine 276.

It belongs to the cytochrome b family. Heme b is required as a cofactor.

The protein resides in the cell inner membrane. Its function is as follows. Component of the green S-bacteria bc complex, which consists of the Rieske protein and cytochrome b subunit but appears to lack a cytochrome c1-equivalent. This complex has a comparatively low redox potential. The sequence is that of Cytochrome bc complex cytochrome b subunit (petB) from Chlorobaculum thiosulfatiphilum (Chlorobium limicola f.sp. thiosulfatophilum).